The following is a 428-amino-acid chain: Mitochondrial import inner membrane translocase subunit TIM50-C (428 aa).

Residues 59–79 (LFTCTALPAAAPALFSILHTA) traverse the membrane as a helical segment. Residues 80 to 428 (RGYSSTTKQE…KQWSRNILGR (349 aa)) are Mitochondrial intermembrane-facing. A disordered region spans residues 112–138 (FPQTSPEVDSNAEQERKKREEEEEKEN). The segment covering 124–138 (EQERKKREEEEEKEN) has biased composition (basic and acidic residues). Residues 224 to 367 (YVQPRYTLVL…LDLIAFLKII (144 aa)) form the FCP1 homology domain.

The protein belongs to the TIM50 family. As to quaternary structure, component of the TIM23 complex at least composed of Tim23, Tim17 (Tim17a1, Tim17a2 or Tim17b1) and a Tim50.

The protein resides in the mitochondrion inner membrane. In terms of biological role, essential component of the TIM23 complex, a complex that mediates the translocation of transit peptide-containing proteins across the mitochondrial inner membrane. This is Mitochondrial import inner membrane translocase subunit TIM50-C (ttm50) from Drosophila melanogaster (Fruit fly).